The following is an 839-amino-acid chain: V-type proton ATPase 116 kDa subunit a 1 (839 aa).

Residues 1–395 lie on the Cytoplasmic side of the membrane; the sequence is MGELFRSEEM…DAYGIGTYRE (395 aa). 2 positions are modified to phosphothreonine: T257 and T367. The residue at position 371 (Y371) is a Phosphotyrosine. A helical membrane pass occupies residues 396–414; the sequence is INPAPYTVITFPFLFAVMF. Residues 415–416 lie on the Vacuolar side of the membrane; it reads GD. The chain crosses the membrane as a helical span at residues 417-433; it reads FGHGILMTLFAVWMVLR. The Cytoplasmic segment spans residues 434–448; sequence ESRILSQKHENEMFS. The helical transmembrane segment at 449-478 threads the bilayer; that stretch reads MVFSGRYIILLMGLFSIYTGLIYNDCFSKS. Residues 479–542 lie on the Vacuolar side of the membrane; the sequence is LNIFGSSWSV…ATNKLTFLNS (64 aa). The chain crosses the membrane as a helical span at residues 543–562; it reads FKMKMSVILGIIHMLFGVSL. The Cytoplasmic portion of the chain corresponds to 563–580; that stretch reads SLFNHIYFKKPLNIYFGF. Residues 581 to 601 traverse the membrane as a helical segment; it reads IPEIIFMSSLFGYLVILIFYK. Topologically, residues 602–646 are vacuolar; that stretch reads WTAYDAHSSRNAPSLLIHFINMFLFSYPESGNAMLYSGQKGIQCF. A helical membrane pass occupies residues 647–666; sequence LIVVAMLCVPWMLLFKPLIL. Over 667 to 726 the chain is Cytoplasmic; it reads RHQYLRKKHLGTLNFGGIRVGNGPTEEDAEIIQHDQLSTHSEDAEEFDFGDTMVHQAIHT. The chain crosses the membrane as a helical span at residues 727-751; that stretch reads IEYCLGCISNTASYLRLWALSLAHA. Residues 752-772 are Vacuolar-facing; that stretch reads QLSEVLWTMVIHIGLHVRSLA. A helical membrane pass occupies residues 773–811; that stretch reads GGLGLFFIFAAFATLTVAILLIMEGLSAFLHALRLHWVE. The Cytoplasmic segment spans residues 812–839; sequence FQNKFYTGTGFKFLPFSFEHIREGKFDE.

Belongs to the V-ATPase 116 kDa subunit family. As to quaternary structure, V-ATPase is a heteromultimeric enzyme made up of two complexes: the ATP-hydrolytic V1 complex and the proton translocation V0 complex. The V1 complex consists of three catalytic AB heterodimers that form a heterohexamer, three peripheral stalks each consisting of EG heterodimers, one central rotor including subunits D and F, and the regulatory subunits C and H. The proton translocation complex V0 consists of the proton transport subunit a, a ring of proteolipid subunits c9c'', rotary subunit d, subunits e and f, and the accessory subunits ATP6AP1/Ac45 and ATP6AP2/PRR. Interacts with SPAAR. As to expression, predominantly expressed in neurons in the cortex and in the dentate gyrus, CA1 and CA3 regions of the hippocampus (at protein level). Expressed at lower levels in astrocytes, oligodendrocytes and microglia (at protein level). In the cerebellum, present in Purkinje and granule cells (at protein level).

It is found in the cytoplasmic vesicle. Its subcellular location is the clathrin-coated vesicle membrane. It localises to the secretory vesicle. The protein resides in the synaptic vesicle membrane. The protein localises to the melanosome. In terms of biological role, subunit of the V0 complex of vacuolar(H+)-ATPase (V-ATPase), a multisubunit enzyme composed of a peripheral complex (V1) that hydrolyzes ATP and a membrane integral complex (V0) that translocates protons. V-ATPase is responsible for the acidification of various organelles, such as lysosomes, endosomes, the trans-Golgi network, and secretory granules, including synaptic vesicles. In certain cell types, can be exported to the plasma membrane, where it is involved in the acidification of the extracellular environment. Required for assembly and activity of the vacuolar ATPase. Through its action on compartment acidification, plays an essential role in neuronal development in terms of integrity and connectivity of neurons. The chain is V-type proton ATPase 116 kDa subunit a 1 (Atp6v0a1) from Mus musculus (Mouse).